The sequence spans 151 residues: Large ribosomal subunit protein uL30 (151 aa).

Belongs to the universal ribosomal protein uL30 family. Part of the 50S ribosomal subunit.

The protein is Large ribosomal subunit protein uL30 of Methanothrix thermoacetophila (strain DSM 6194 / JCM 14653 / NBRC 101360 / PT) (Methanosaeta thermophila).